Here is a 301-residue protein sequence, read N- to C-terminus: Acetylglutamate kinase (301 aa).

Substrate-binding positions include 72–73, Arg94, and Asn199; that span reads GG.

It belongs to the acetylglutamate kinase family. ArgB subfamily.

It localises to the cytoplasm. It carries out the reaction N-acetyl-L-glutamate + ATP = N-acetyl-L-glutamyl 5-phosphate + ADP. It functions in the pathway amino-acid biosynthesis; L-arginine biosynthesis; N(2)-acetyl-L-ornithine from L-glutamate: step 2/4. Its function is as follows. Catalyzes the ATP-dependent phosphorylation of N-acetyl-L-glutamate. In Bartonella tribocorum (strain CIP 105476 / IBS 506), this protein is Acetylglutamate kinase.